The following is a 353-amino-acid chain: Phosphate acyltransferase (353 aa).

Belongs to the PlsX family. In terms of assembly, homodimer. Probably interacts with PlsY.

The protein localises to the cytoplasm. It catalyses the reaction a fatty acyl-[ACP] + phosphate = an acyl phosphate + holo-[ACP]. The protein operates within lipid metabolism; phospholipid metabolism. In terms of biological role, catalyzes the reversible formation of acyl-phosphate (acyl-PO(4)) from acyl-[acyl-carrier-protein] (acyl-ACP). This enzyme utilizes acyl-ACP as fatty acyl donor, but not acyl-CoA. This is Phosphate acyltransferase from Rhodopseudomonas palustris (strain ATCC BAA-98 / CGA009).